A 385-amino-acid chain; its full sequence is Probable dual-specificity RNA methyltransferase RlmN (385 aa).

A disordered region spans residues 1–24; that stretch reads MTATTAESGNLLPLVSGRSRPPRH. The active-site Proton acceptor is the Glu114. One can recognise a Radical SAM core domain in the interval 120–364; the sequence is YPQRATVCVS…AATVRDTRGR (245 aa). Cys127 and Cys370 are oxidised to a cystine. The [4Fe-4S] cluster site is built by Cys134, Cys138, and Cys141. Residues 194-195, Ser228, 251-253, and Asn327 contribute to the S-adenosyl-L-methionine site; these read GE and SLH. Cys370 functions as the S-methylcysteine intermediate in the catalytic mechanism.

Belongs to the radical SAM superfamily. RlmN family. The cofactor is [4Fe-4S] cluster.

The protein localises to the cytoplasm. It carries out the reaction adenosine(2503) in 23S rRNA + 2 reduced [2Fe-2S]-[ferredoxin] + 2 S-adenosyl-L-methionine = 2-methyladenosine(2503) in 23S rRNA + 5'-deoxyadenosine + L-methionine + 2 oxidized [2Fe-2S]-[ferredoxin] + S-adenosyl-L-homocysteine. The enzyme catalyses adenosine(37) in tRNA + 2 reduced [2Fe-2S]-[ferredoxin] + 2 S-adenosyl-L-methionine = 2-methyladenosine(37) in tRNA + 5'-deoxyadenosine + L-methionine + 2 oxidized [2Fe-2S]-[ferredoxin] + S-adenosyl-L-homocysteine. Specifically methylates position 2 of adenine 2503 in 23S rRNA and position 2 of adenine 37 in tRNAs. The polypeptide is Probable dual-specificity RNA methyltransferase RlmN (Parafrankia sp. (strain EAN1pec)).